We begin with the raw amino-acid sequence, 207 residues long: UPF0328 protein ECU02_1590/ECU04_0060/ECU08_2120 (207 aa).

Disordered regions lie at residues 1-154 and 180-207; these read MPRP…HSHT and GRLHGSPTKGAQTAQQAQPHPPKQLATL. 2 stretches are compositionally biased toward basic and acidic residues: residues 14–24 and 75–97; these read DHPDFRSESSA and HTEGCHTHEANPEPNTKHTETES. Composition is skewed to polar residues over residues 98 to 121 and 133 to 149; these read PKPQTSTQHHTPITIPSSLLSQNT and SRPSTIPANTYQPQSPH.

It belongs to the UPF0328 family.

The protein is UPF0328 protein ECU02_1590/ECU04_0060/ECU08_2120 of Encephalitozoon cuniculi (strain GB-M1) (Microsporidian parasite).